The following is a 179-amino-acid chain: Nucleoside diphosphate kinase 6 (179 aa).

Lys18, Phe67, Arg95, Thr101, Arg115, and Asn125 together coordinate ATP. The active-site Pros-phosphohistidine intermediate is His128.

Belongs to the NDK family. The cofactor is Mg(2+).

The catalysed reaction is a 2'-deoxyribonucleoside 5'-diphosphate + ATP = a 2'-deoxyribonucleoside 5'-triphosphate + ADP. The enzyme catalyses a ribonucleoside 5'-diphosphate + ATP = a ribonucleoside 5'-triphosphate + ADP. In terms of biological role, major role in the synthesis of nucleoside triphosphates other than ATP. The ATP gamma phosphate is transferred to the NDP beta phosphate via a ping-pong mechanism, using a phosphorylated active-site intermediate. The polypeptide is Nucleoside diphosphate kinase 6 (nme6) (Xenopus tropicalis (Western clawed frog)).